The sequence spans 299 residues: 4-hydroxy-tetrahydrodipicolinate synthase 2 (299 aa).

Thr54 is a binding site for pyruvate. Catalysis depends on Tyr142, which acts as the Proton donor/acceptor. Lys170 functions as the Schiff-base intermediate with substrate in the catalytic mechanism. Val210 contributes to the pyruvate binding site.

The protein belongs to the DapA family. In terms of assembly, homotetramer; dimer of dimers.

The protein localises to the cytoplasm. It catalyses the reaction L-aspartate 4-semialdehyde + pyruvate = (2S,4S)-4-hydroxy-2,3,4,5-tetrahydrodipicolinate + H2O + H(+). Its pathway is amino-acid biosynthesis; L-lysine biosynthesis via DAP pathway; (S)-tetrahydrodipicolinate from L-aspartate: step 3/4. In terms of biological role, catalyzes the condensation of (S)-aspartate-beta-semialdehyde [(S)-ASA] and pyruvate to 4-hydroxy-tetrahydrodipicolinate (HTPA). The sequence is that of 4-hydroxy-tetrahydrodipicolinate synthase 2 from Streptomyces coelicolor (strain ATCC BAA-471 / A3(2) / M145).